The chain runs to 293 residues: Glutamine sensor pib2 (293 aa).

A disordered region spans residues 38 to 75 (APTRQATNGTGSVSGSPNSSSNSTPANQGSLPSHTNPQ). Low complexity predominate over residues 44–62 (TNGTGSVSGSPNSSSNSTP). Over residues 63-75 (ANQGSLPSHTNPQ) the composition is skewed to polar residues. An FYVE-type; degenerate zinc finger spans residues 156-220 (DVSVCSFPSC…SCVSCFYEYL (65 aa)). Zn(2+) contacts are provided by Cys-178, Cys-181, Cys-212, and Cys-215. A compositionally biased stretch (polar residues) spans 242–256 (APQQATTHPPSQPKN). Residues 242–276 (APQQATTHPPSQPKNAVSVPIPKMDSTDSKGELPS) are disordered. Residue Ser-259 is modified to Phosphoserine.

Interacts with the TORC1 complex when activated by glutamine or cysteine.

It is found in the vacuole membrane. Its activity is regulated as follows. Activated by glutamine. Functionally, functions as an intracellular glutamine sensor that directly activates the TORC1 signaling pathway, to promote cell growth when glutamine is available. The polypeptide is Glutamine sensor pib2 (Schizosaccharomyces pombe (strain 972 / ATCC 24843) (Fission yeast)).